Reading from the N-terminus, the 27-residue chain is Phospholipase A2 1 (27 aa).

The protein belongs to the phospholipase A2 family. Group I subfamily. It depends on Ca(2+) as a cofactor. In terms of tissue distribution, expressed by the venom gland.

It is found in the secreted. The enzyme catalyses a 1,2-diacyl-sn-glycero-3-phosphocholine + H2O = a 1-acyl-sn-glycero-3-phosphocholine + a fatty acid + H(+). Its function is as follows. Snake venom phospholipase A2 (PLA2) that inhibits neuromuscular transmission by blocking acetylcholine release from the nerve termini. PLA2 catalyzes the calcium-dependent hydrolysis of the 2-acyl groups in 3-sn-phosphoglycerides. This chain is Phospholipase A2 1, found in Micrurus nigrocinctus (Central American coral snake).